Consider the following 89-residue polypeptide: Small ribosomal subunit protein uS15 (89 aa).

Residues 1 to 21 (MSITPERKQEMIKDYATKEGD) show a composition bias toward basic and acidic residues. Residues 1–23 (MSITPERKQEMIKDYATKEGDTG) form a disordered region.

The protein belongs to the universal ribosomal protein uS15 family. Part of the 30S ribosomal subunit. Forms a bridge to the 50S subunit in the 70S ribosome, contacting the 23S rRNA.

Its function is as follows. One of the primary rRNA binding proteins, it binds directly to 16S rRNA where it helps nucleate assembly of the platform of the 30S subunit by binding and bridging several RNA helices of the 16S rRNA. Functionally, forms an intersubunit bridge (bridge B4) with the 23S rRNA of the 50S subunit in the ribosome. The protein is Small ribosomal subunit protein uS15 of Rhodospirillum rubrum (strain ATCC 11170 / ATH 1.1.1 / DSM 467 / LMG 4362 / NCIMB 8255 / S1).